Here is a 767-residue protein sequence, read N- to C-terminus: Cullin-1 (767 aa).

Positions 699 to 760 (DRKLLLQSAI…EKEYLERQGR (62 aa)) constitute a Cullin neddylation domain. Lys713 participates in a covalent cross-link: Glycyl lysine isopeptide (Lys-Gly) (interchain with G-Cter in NEDD8).

This sequence belongs to the cullin family. Component of multiple Cul1-RING E3 ubiquitin-protein ligase complexes commonly known as SCF (SKP1-CUL1-F-box) complexes, consisting of cul1, skp1, pip1 and a variable F-box domain-containing protein as substrate-specific subunit. Binds to the pop1 homodimer, the pop2 homodimer and the pop1/pop2 heterodimer forming the SCF(pop1-pop2) complex. Interacts with pof3, pof14 and skp1. Post-translationally, neddylated; enhancing the ubiquitin-ligase activity.

The protein resides in the cytoplasm. It functions in the pathway protein modification; protein ubiquitination. Core component of multiple cullin-RING-based SCF (SKP1-CUL1-F-box protein) E3 ubiquitin-protein ligase complexes, which mediate the ubiquitination of target proteins. The functional specificity of the SCF complex depends on the F-box protein as substrate recognition component. SCF(pop1-pop2) is required for the maintenance of ploidy and directs ubiquitination of cig2. The protein is Cullin-1 (cul1) of Schizosaccharomyces pombe (strain 972 / ATCC 24843) (Fission yeast).